Consider the following 153-residue polypeptide: MKCPFCNHLHDKVVDSRESKEGDAIRRRRECLECTRRYTTYERIDEVPYMVVKKDGRREKFDRQKVLGGLLKACEKRPVSMAKLSELVNRVEYKVSDSPDREISTIDIGEYLMENLRELDKIAYVRFASVYRDFQDEQAFFNELKHLMRQKMS.

A zinc finger spans residues 3-34 (CPFCNHLHDKVVDSRESKEGDAIRRRRECLEC). The ATP-cone domain occupies 49-139 (YMVVKKDGRR…VYRDFQDEQA (91 aa)).

This sequence belongs to the NrdR family. It depends on Zn(2+) as a cofactor.

In terms of biological role, negatively regulates transcription of bacterial ribonucleotide reductase nrd genes and operons by binding to NrdR-boxes. The protein is Transcriptional repressor NrdR of Solibacter usitatus (strain Ellin6076).